A 168-amino-acid chain; its full sequence is Cyclic pyranopterin monophosphate synthase (168 aa).

Substrate contacts are provided by residues 75–77 (MCH) and 115–116 (ME). Residue D130 is part of the active site.

It belongs to the MoaC family. In terms of assembly, homohexamer; trimer of dimers.

It catalyses the reaction (8S)-3',8-cyclo-7,8-dihydroguanosine 5'-triphosphate = cyclic pyranopterin phosphate + diphosphate. The protein operates within cofactor biosynthesis; molybdopterin biosynthesis. Catalyzes the conversion of (8S)-3',8-cyclo-7,8-dihydroguanosine 5'-triphosphate to cyclic pyranopterin monophosphate (cPMP). This chain is Cyclic pyranopterin monophosphate synthase, found in Bacillus licheniformis (strain ATCC 14580 / DSM 13 / JCM 2505 / CCUG 7422 / NBRC 12200 / NCIMB 9375 / NCTC 10341 / NRRL NRS-1264 / Gibson 46).